The sequence spans 314 residues: Nerylneryl diphosphate synthase CPT2, chloroplastic (314 aa).

The N-terminal 61 residues, 1–61, are a transit peptide targeting the chloroplast; sequence MNSSIVSQHF…MSDRGLSKIS (61 aa). Asp97 is a catalytic residue.

Belongs to the UPP synthase family. The cofactor is Mg(2+). Expressed in stems. Expressed in petiolules. Expressed at low levels in leaf trichomes, old leaf and roots.

The protein localises to the plastid. Its subcellular location is the chloroplast. The catalysed reaction is 3 isopentenyl diphosphate + dimethylallyl diphosphate = nerylneryl diphosphate + 3 diphosphate. The enzyme catalyses isopentenyl diphosphate + dimethylallyl diphosphate = neryl diphosphate + diphosphate. It carries out the reaction neryl diphosphate + isopentenyl diphosphate = (2Z,6Z)-farnesyl diphosphate + diphosphate. It catalyses the reaction (2Z,6Z)-farnesyl diphosphate + isopentenyl diphosphate = nerylneryl diphosphate + diphosphate. Its function is as follows. Uses dimethylallyl diphosphate and isopentenyl diphosphate to catalyze the cis-prenyl chain elongation and produce the 20 carbon product nerylneryl diphosphate. The polypeptide is Nerylneryl diphosphate synthase CPT2, chloroplastic (Solanum lycopersicum (Tomato)).